Here is a 184-residue protein sequence, read N- to C-terminus: Potassium-transporting ATPase KdpC subunit (184 aa).

Residues 10–30 (LTFLMVVLFAVIYPLAIYGIA) form a helical membrane-spanning segment.

Belongs to the KdpC family. In terms of assembly, the system is composed of three essential subunits: KdpA, KdpB and KdpC.

The protein localises to the cell inner membrane. In terms of biological role, part of the high-affinity ATP-driven potassium transport (or Kdp) system, which catalyzes the hydrolysis of ATP coupled with the electrogenic transport of potassium into the cytoplasm. This subunit acts as a catalytic chaperone that increases the ATP-binding affinity of the ATP-hydrolyzing subunit KdpB by the formation of a transient KdpB/KdpC/ATP ternary complex. The protein is Potassium-transporting ATPase KdpC subunit of Flavobacterium psychrophilum (strain ATCC 49511 / DSM 21280 / CIP 103535 / JIP02/86).